The sequence spans 265 residues: Hydroxyethylthiazole kinase 2 (265 aa).

Position 39 (Met-39) interacts with substrate. Positions 115 and 168 each coordinate ATP. Residue Gly-195 coordinates substrate.

It belongs to the Thz kinase family. Mg(2+) serves as cofactor.

The enzyme catalyses 5-(2-hydroxyethyl)-4-methylthiazole + ATP = 4-methyl-5-(2-phosphooxyethyl)-thiazole + ADP + H(+). Its pathway is cofactor biosynthesis; thiamine diphosphate biosynthesis; 4-methyl-5-(2-phosphoethyl)-thiazole from 5-(2-hydroxyethyl)-4-methylthiazole: step 1/1. Functionally, catalyzes the phosphorylation of the hydroxyl group of 4-methyl-5-beta-hydroxyethylthiazole (THZ). The protein is Hydroxyethylthiazole kinase 2 of Clostridium botulinum (strain 657 / Type Ba4).